Consider the following 50-residue polypeptide: Large ribosomal subunit protein bL33 (50 aa).

The protein belongs to the bacterial ribosomal protein bL33 family.

In Citrifermentans bemidjiense (strain ATCC BAA-1014 / DSM 16622 / JCM 12645 / Bem) (Geobacter bemidjiensis), this protein is Large ribosomal subunit protein bL33.